The following is a 143-amino-acid chain: Ribonuclease H (143 aa).

Residues Met1–Glu140 form the RNase H type-1 domain. The Mg(2+) site is built by Asp8, Glu46, Asp68, and Asp132.

Belongs to the RNase H family. Monomer. Requires Mg(2+) as cofactor.

It is found in the cytoplasm. The catalysed reaction is Endonucleolytic cleavage to 5'-phosphomonoester.. In terms of biological role, endonuclease that specifically degrades the RNA of RNA-DNA hybrids. The protein is Ribonuclease H of Legionella pneumophila (strain Paris).